The chain runs to 728 residues: E3 ubiquitin-protein ligase LNX (728 aa).

The RING-type zinc finger occupies 45-83 (CHICLQALLDPLDTPCGHTYCTLCLTNFLVEKDFCPVDR). Positions 185–188 (NPAY) match the NPXY motif motif. Residues 185-220 (NPAYVSSVEDGEPVANSSDSGRSNRTRARPFERSTM) form a disordered region. An interaction with MAGEB18 region spans residues 186–244 (PAYVSSVEDGEPVANSSDSGRSNRTRARPFERSTMRSRSFKKINRALSALRRTKSGSVV). PDZ domains lie at 278 to 362 (SIKI…VLRE) and 385 to 467 (HVIL…VSRQ). Ser-445 bears the Phosphoserine mark. Residues 481-500 (WISNGQQSPGPGERNTASKP) are disordered. PDZ domains lie at 508-593 (VVSV…ALEV) and 638-723 (DVIL…IASW).

Interacts with CXADR. Interacts with MAGEB18 and MAGEF1. Interacts with the phosphotyrosine interaction domain of all isoforms of NUMB. IGSF5/JAM4 interacts with isoform 2 through the second PDZ domain, other isoforms may also interact with IGSF5/JAM4. As to expression, isoform 1 and isoform 2 are expressed in the heart. Isoform 1 is also expressed in kidney, lung and skeletal muscle while isoform 2 is also expressed in brain.

Its subcellular location is the cytoplasm. The enzyme catalyses S-ubiquitinyl-[E2 ubiquitin-conjugating enzyme]-L-cysteine + [acceptor protein]-L-lysine = [E2 ubiquitin-conjugating enzyme]-L-cysteine + N(6)-ubiquitinyl-[acceptor protein]-L-lysine.. It functions in the pathway protein modification; protein ubiquitination. Its function is as follows. E3 ubiquitin-protein ligase that mediates ubiquitination and subsequent proteasomal degradation of NUMB. E3 ubiquitin ligases accept ubiquitin from an E2 ubiquitin-conjugating enzyme in the form of a thioester and then directly transfers the ubiquitin to targeted substrates. Mediates ubiquitination of isoform p66 and isoform p72 of NUMB, but not that of isoform p71 or isoform p65. Isoform 2 provides an endocytic scaffold for IGSF5/JAM4. The sequence is that of E3 ubiquitin-protein ligase LNX (Lnx1) from Mus musculus (Mouse).